We begin with the raw amino-acid sequence, 163 residues long: ATP synthase subunit b 1 (163 aa).

The chain crosses the membrane as a helical span at residues phenylalanine 5–leucine 25.

It belongs to the ATPase B chain family. F-type ATPases have 2 components, F(1) - the catalytic core - and F(0) - the membrane proton channel. F(1) has five subunits: alpha(3), beta(3), gamma(1), delta(1), epsilon(1). F(0) has three main subunits: a(1), b(2) and c(10-14). The alpha and beta chains form an alternating ring which encloses part of the gamma chain. F(1) is attached to F(0) by a central stalk formed by the gamma and epsilon chains, while a peripheral stalk is formed by the delta and b chains.

It is found in the cell inner membrane. Functionally, f(1)F(0) ATP synthase produces ATP from ADP in the presence of a proton or sodium gradient. F-type ATPases consist of two structural domains, F(1) containing the extramembraneous catalytic core and F(0) containing the membrane proton channel, linked together by a central stalk and a peripheral stalk. During catalysis, ATP synthesis in the catalytic domain of F(1) is coupled via a rotary mechanism of the central stalk subunits to proton translocation. In terms of biological role, component of the F(0) channel, it forms part of the peripheral stalk, linking F(1) to F(0). This Rhizobium leguminosarum bv. trifolii (strain WSM2304) protein is ATP synthase subunit b 1.